A 361-amino-acid polypeptide reads, in one-letter code: Phosphoserine aminotransferase (361 aa).

R43 contacts L-glutamate. Pyridoxal 5'-phosphate-binding positions include 77 to 78 (AS), W103, T153, D173, and Q196. N6-(pyridoxal phosphate)lysine is present on K197. 238 to 239 (NT) is a pyridoxal 5'-phosphate binding site.

This sequence belongs to the class-V pyridoxal-phosphate-dependent aminotransferase family. SerC subfamily. In terms of assembly, homodimer. Pyridoxal 5'-phosphate is required as a cofactor.

It is found in the cytoplasm. The enzyme catalyses O-phospho-L-serine + 2-oxoglutarate = 3-phosphooxypyruvate + L-glutamate. The catalysed reaction is 4-(phosphooxy)-L-threonine + 2-oxoglutarate = (R)-3-hydroxy-2-oxo-4-phosphooxybutanoate + L-glutamate. It functions in the pathway amino-acid biosynthesis; L-serine biosynthesis; L-serine from 3-phospho-D-glycerate: step 2/3. Its pathway is cofactor biosynthesis; pyridoxine 5'-phosphate biosynthesis; pyridoxine 5'-phosphate from D-erythrose 4-phosphate: step 3/5. In terms of biological role, catalyzes the reversible conversion of 3-phosphohydroxypyruvate to phosphoserine and of 3-hydroxy-2-oxo-4-phosphonooxybutanoate to phosphohydroxythreonine. This chain is Phosphoserine aminotransferase, found in Pseudomonas syringae pv. syringae (strain B728a).